The chain runs to 947 residues: Translation initiation factor IF-2 (947 aa).

The tract at residues 55–361 (TKDAQAGSAK…PVTERKFHEL (307 aa)) is disordered. Residues 63 to 73 (AKDKQVAEQKA) show a composition bias toward basic and acidic residues. The span at 76–90 (AKATTPQPAAATQEA) shows a compositional bias: low complexity. 3 stretches are compositionally biased toward basic and acidic residues: residues 103–116 (FKAE…EQAA), 125–134 (SNDRKSDYRQ), and 170–183 (NDGH…DKNR). Low complexity predominate over residues 190–204 (RQQDTGRQGQTQAGA). Basic and acidic residues-rich tracts occupy residues 225–249 (ARQR…RQEA), 257–267 (QTEDKKHREAS), and 294–311 (NRPD…DGQK). Positions 316-334 (SWNSQNQVRNQKNSNWNNN) are enriched in low complexity. A compositionally biased stretch (basic residues) spans 335 to 345 (KKNKKGKHHKN). Positions 448–617 (ERAPVVTIMG…LLVAEVEELK (170 aa)) constitute a tr-type G domain. The segment at 457–464 (GHVDHGKT) is G1. A GTP-binding site is contributed by 457-464 (GHVDHGKT). Residues 482–486 (GITQH) form a G2 region. A G3 region spans residues 503-506 (DTPG). GTP contacts are provided by residues 503–507 (DTPGH) and 557–560 (NKID). The G4 stretch occupies residues 557–560 (NKID). Positions 593-595 (SAK) are G5.

The protein belongs to the TRAFAC class translation factor GTPase superfamily. Classic translation factor GTPase family. IF-2 subfamily.

It localises to the cytoplasm. In terms of biological role, one of the essential components for the initiation of protein synthesis. Protects formylmethionyl-tRNA from spontaneous hydrolysis and promotes its binding to the 30S ribosomal subunits. Also involved in the hydrolysis of GTP during the formation of the 70S ribosomal complex. This is Translation initiation factor IF-2 from Streptococcus equi subsp. zooepidemicus (strain MGCS10565).